Here is a 69-residue protein sequence, read N- to C-terminus: Neuropeptide-like protein 30 (69 aa).

The N-terminal stretch at 1–22 (MISTSSILILVVLLACFMAASA) is a signal peptide. Tyrosine amide occurs at positions 29, 39, 46, and 53. Tryptophan amide occurs at positions 58 and 67.

Belongs to the YARP (YGGW-amide related peptide) family. As to expression, expressed in hypoderm.

Its subcellular location is the secreted. In terms of biological role, may have antimicrobial activity. May play a role in response to fungal infection. The protein is Neuropeptide-like protein 30 (nlp-30) of Caenorhabditis elegans.